The following is a 779-amino-acid chain: Phosphatidylinositol 4-phosphate 5-kinase 4 (779 aa).

A disordered region spans residues 20–61 (QQAKKRANSIFGTVSVAPQTDDDATTTTEENDDETSTNRSSI). A compositionally biased stretch (acidic residues) spans 39 to 54 (TDDDATTTTEENDDET). 8 MORN repeats span residues 77-99 (YTGQ…DGCM), 100-122 (YIGD…SGAT), 123-145 (YEGE…SGDT), 146-168 (YKGQ…NGDV), 169-191 (YDGE…DGSY), 192-214 (YMGE…DGNR), 215-237 (YDGF…DGSF), and 238-259 (YVGH…SGDD). One can recognise a PIPK domain in the interval 382–775 (TISKGHRNYE…RFRDFIFKVF (394 aa)). Positions 735-756 (YDISKKLEHAYKSIQYDPTSIS) are activation loop.

The catalysed reaction is a 1,2-diacyl-sn-glycero-3-phospho-(1D-myo-inositol 4-phosphate) + ATP = a 1,2-diacyl-sn-glycero-3-phospho-(1D-myo-inositol-4,5-bisphosphate) + ADP + H(+). The chain is Phosphatidylinositol 4-phosphate 5-kinase 4 (PIP5K4) from Arabidopsis thaliana (Mouse-ear cress).